The following is a 551-amino-acid chain: Cation/acetate symporter ActP (551 aa).

Transmembrane regions (helical) follow at residues 34 to 54 (IEAI…TYWA), 77 to 97 (GLAI…SALV), 104 to 124 (GLIY…LIAE), 150 to 170 (LSAC…MVGA), 184 to 204 (VAVV…GMLA), 207 to 227 (WVQI…ALMV), 263 to 283 (ISAL…PHIL), 304 to 324 (GFIG…ILLV), 356 to 376 (FFLG…VAGL), 406 to 426 (VSKI…ILFE), 430 to 450 (IAFM…PIIF), 469 to 489 (LGLL…VTIL), and 498 to 518 (YEYP…FFSI).

The protein belongs to the sodium:solute symporter (SSF) (TC 2.A.21) family.

It localises to the cell inner membrane. Functionally, transports acetate. This is Cation/acetate symporter ActP from Yersinia enterocolitica serotype O:8 / biotype 1B (strain NCTC 13174 / 8081).